The sequence spans 119 residues: Holo-[acyl-carrier-protein] synthase (119 aa).

Mg(2+) is bound by residues Asp-8 and Glu-59.

It belongs to the P-Pant transferase superfamily. AcpS family. Requires Mg(2+) as cofactor.

It is found in the cytoplasm. The enzyme catalyses apo-[ACP] + CoA = holo-[ACP] + adenosine 3',5'-bisphosphate + H(+). In terms of biological role, transfers the 4'-phosphopantetheine moiety from coenzyme A to a Ser of acyl-carrier-protein. This chain is Holo-[acyl-carrier-protein] synthase, found in Lactococcus lactis subsp. cremoris (strain SK11).